Here is a 306-residue protein sequence, read N- to C-terminus: Beta-lactamase (306 aa).

The N-terminal stretch at 1–36 is a signal peptide; the sequence is MKLKTKASIKFGICVGLLCLSITGFTPFFNSTHAEA. Ser-89 functions as the Acyl-ester intermediate in the catalytic mechanism. 251-253 contributes to the substrate binding site; sequence KSG.

The protein belongs to the class-A beta-lactamase family.

The protein localises to the secreted. The catalysed reaction is a beta-lactam + H2O = a substituted beta-amino acid. This protein is a beta-lactamase with a substrate specificity for penicillins. The chain is Beta-lactamase (penP) from Bacillus subtilis (strain 168).